Consider the following 109-residue polypeptide: Prothymosin alpha (109 aa).

Positions 1–109 are disordered; that stretch reads MSDTSVDASV…AKKQKTDDDD (109 aa). The span at 9 to 35 shows a compositional bias: basic and acidic residues; it reads SVEKTTKDLKSKDKELVEETENGKDKP. The segment covering 41–81 has biased composition (acidic residues); that stretch reads ENEENGEDGADNEEEEEVDEEDEEDEGEGDDDEGDEDDEAD. The segment covering 99-109 has biased composition (basic and acidic residues); it reads DAKKQKTDDDD.

Belongs to the pro/parathymosin family. In terms of tissue distribution, highly expressed in the testis.

It localises to the nucleus. Its function is as follows. May have role in testicular activity. In Pelophylax lessonae (Pool frog), this protein is Prothymosin alpha.